We begin with the raw amino-acid sequence, 231 residues long: NADH-ubiquinone oxidoreductase chain 4 (231 aa).

The next 6 membrane-spanning stretches (helical) occupy residues 1 to 21 (PIAGSMVLAAILLKLGGYGII), 34 to 54 (MFIPFIVLALWGAILANLTCL), 63 to 85 (IAYSSISHMGLVVATIIIQTPWG), 89 to 111 (AMALMIAHGFTSSALFCLANTTY), 128 to 148 (ILPMTTTWWLLANLMNIAMPP), and 169 to 189 (TIIMLGLSMLITASYSLHMFL).

Belongs to the complex I subunit 4 family.

The protein localises to the mitochondrion membrane. It catalyses the reaction a ubiquinone + NADH + 5 H(+)(in) = a ubiquinol + NAD(+) + 4 H(+)(out). Core subunit of the mitochondrial membrane respiratory chain NADH dehydrogenase (Complex I) that is believed to belong to the minimal assembly required for catalysis. Complex I functions in the transfer of electrons from NADH to the respiratory chain. The immediate electron acceptor for the enzyme is believed to be ubiquinone. The chain is NADH-ubiquinone oxidoreductase chain 4 (MT-ND4) from Lachesis muta muta (Bushmaster).